Reading from the N-terminus, the 831-residue chain is Prolactin receptor (831 aa).

An N-terminal signal peptide occupies residues 1-23; that stretch reads MKQNLISSVQIILLLPLTTVGLT. The Extracellular portion of the chain corresponds to 24–438; sequence SQSFPGKPKI…EIPNDFRVKD (415 aa). Fibronectin type-III domains lie at 30–128, 129–232, 233–331, and 332–433; these read KPKI…VQPG, SPVN…SPPE, KPTI…VQPD, and PPAN…IPND. Residues C36 and C46 are joined by a disulfide bond. N-linked (GlcNAc...) asparagine glycosylation is present at N59. C75 and C86 are joined by a disulfide. N-linked (GlcNAc...) asparagine glycans are attached at residues N91, N100, N112, N132, N262, N303, N315, and N335. Zn(2+) contacts are provided by D414 and H416. Positions 419-423 match the WSXWS motif motif; sequence WSEWS. A helical transmembrane segment spans residues 439–459; that stretch reads MIVWIVLGVLSSLICLIMSWT. Over 460 to 831 the chain is Cytoplasmic; it reads MVLKGYRMIT…DPSSFMPSFK (372 aa). Positions 471–479 match the Box 1 motif motif; the sequence is ILPPVPGPK. 2 disordered regions span residues 527 to 563 and 776 to 831; these read HQLM…SPSL and HTPT…PSFK. The segment covering 545-554 has biased composition (basic and acidic residues); it reads TLKETDRDSG. Over residues 777–803 the composition is skewed to polar residues; the sequence is TPTSQEEPAKETSQNPQQGQVETNMSY.

The protein belongs to the type I cytokine receptor family. Type 1 subfamily.

It localises to the membrane. Functionally, this is a receptor for the anterior pituitary hormone prolactin. This Meleagris gallopavo (Wild turkey) protein is Prolactin receptor (PRLR).